Consider the following 248-residue polypeptide: UPF0736 protein BT9727_1080 (248 aa).

The protein belongs to the UPF0736 family.

This Bacillus thuringiensis subsp. konkukian (strain 97-27) protein is UPF0736 protein BT9727_1080.